Consider the following 127-residue polypeptide: Aspartate 1-decarboxylase (127 aa).

S25 functions as the Schiff-base intermediate with substrate; via pyruvic acid in the catalytic mechanism. S25 carries the post-translational modification Pyruvic acid (Ser). T57 contributes to the substrate binding site. Y58 (proton donor) is an active-site residue. 73–75 is a binding site for substrate; sequence GAA.

It belongs to the PanD family. As to quaternary structure, heterooctamer of four alpha and four beta subunits. Requires pyruvate as cofactor. In terms of processing, is synthesized initially as an inactive proenzyme, which is activated by self-cleavage at a specific serine bond to produce a beta-subunit with a hydroxyl group at its C-terminus and an alpha-subunit with a pyruvoyl group at its N-terminus.

It localises to the cytoplasm. The enzyme catalyses L-aspartate + H(+) = beta-alanine + CO2. It participates in cofactor biosynthesis; (R)-pantothenate biosynthesis; beta-alanine from L-aspartate: step 1/1. In terms of biological role, catalyzes the pyruvoyl-dependent decarboxylation of aspartate to produce beta-alanine. In Bacillus velezensis (strain DSM 23117 / BGSC 10A6 / LMG 26770 / FZB42) (Bacillus amyloliquefaciens subsp. plantarum), this protein is Aspartate 1-decarboxylase.